The sequence spans 138 residues: uncharacterized protein (138 aa).

This sequence to phage 186 CP81.

This is an uncharacterized protein from Salmonella typhimurium (strain LT2 / SGSC1412 / ATCC 700720).